The primary structure comprises 852 residues: Protein mono-ADP-ribosyltransferase PARP8 (852 aa).

Disordered regions lie at residues 113–134 (NGEE…NDSE) and 289–310 (SPSY…EQDG). Residues 123–134 (VEEDSEGDNDSE) show a composition bias toward acidic residues. Residues Cys332, Cys366, Cys375, and Cys394 each carry the ADP-ribosylcysteine modification. The region spanning 615 to 842 (EMTQAPYLEI…QEGGIHKEIL (228 aa)) is the PARP catalytic domain. The segment at 748–775 (QKVSSKDEPASSSKSSNASQSQKKGQQS) is disordered. Residues 757 to 775 (ASSSKSSNASQSQKKGQQS) show a composition bias toward low complexity.

This sequence belongs to the ARTD/PARP family. In terms of processing, auto-mono-ADP-ribosylated.

The catalysed reaction is L-cysteinyl-[protein] + NAD(+) = S-(ADP-D-ribosyl)-L-cysteinyl-[protein] + nicotinamide + H(+). Mono-ADP-ribosyltransferase that mediates mono-ADP-ribosylation of target proteins. The polypeptide is Protein mono-ADP-ribosyltransferase PARP8 (Mus musculus (Mouse)).